The primary structure comprises 250 residues: Small ribosomal subunit protein uS2 (250 aa).

The protein belongs to the universal ribosomal protein uS2 family.

The protein is Small ribosomal subunit protein uS2 of Teredinibacter turnerae (strain ATCC 39867 / T7901).